Here is a 1773-residue protein sequence, read N- to C-terminus: Zinc finger CCCH domain-containing protein 19 (1773 aa).

The interval 145–166 (SGDRLEENKEVSMEEEPSSHEL) is disordered. The segment covering 147–156 (DRLEENKEVS) has biased composition (basic and acidic residues). Residues 196–218 (GEEIESDLESKKEKVDVIEEETT) adopt a coiled-coil conformation. 3 disordered regions span residues 270-290 (IGEGAKDLTDGDAKEGVDVTE), 361-409 (DVDK…AGQT), and 434-591 (ISEM…KTVK). Composition is skewed to basic and acidic residues over residues 273–286 (GAKDLTDGDAKEGV) and 361–378 (DVDKDSEAGKSLDIHVPE). Residues 403–437 (AEEAGQTVDLEEIREENQELSKELAQVDETKISEM) adopt a coiled-coil conformation. Basic and acidic residues-rich tracts occupy residues 444–455 (MIKDEDQEKDDN) and 497–513 (KVDRTKIAEVSEETDTR). Acidic residues-rich tracts occupy residues 514–529 (IEDEDQEKDDEMTDVA) and 551–572 (EEMTETQEDSVMADEEPEEVEE). Residues 578 to 588 (GGKRKRGRNTK) show a composition bias toward basic residues. The Nuclear localization signal 1 signature appears at 581–588 (RKRGRNTK). The segment at 599-665 (EDVCFMCFDG…TYLCYTCMFS (67 aa)) adopts a PHD-type zinc-finger fold. The segment covering 741 to 751 (AKRPLKGHETN) has biased composition (basic and acidic residues). A disordered region spans residues 741 to 797 (AKRPLKGHETNASKQGTASETDYVTDGGSDSDSSPKKRKTRSRSKSGSAEKILSSGD). Over residues 752 to 762 (ASKQGTASETD) the composition is skewed to polar residues. One can recognise an SWIB/MDM2 domain in the interval 801 to 884 (SDETMEWASK…LNLLDSHFLK (84 aa)). Residues 903 to 919 (PNHVDVDENLDHPVKSG) show a composition bias toward basic and acidic residues. Residues 903–935 (PNHVDVDENLDHPVKSGKDKKRKTRKKNVRKGR) are disordered. Over residues 920–935 (KDKKRKTRKKNVRKGR) the composition is skewed to basic residues. The Nuclear localization signal 2 signature appears at 921–928 (DKKRKTRK). The region spanning 944–1076 (AVDMHNINLI…KAIALQEVRV (133 aa)) is the Plus3 domain. A compositionally biased stretch (basic and acidic residues) spans 1139 to 1152 (EEIPEIHADPKMDP). The interval 1139–1274 (EEIPEIHADP…PETPARSSRA (136 aa)) is disordered. The segment covering 1153 to 1163 (DCESEDEDEKE) has biased composition (acidic residues). The span at 1193–1212 (FSSNESWTGTSNYSNTSANR) shows a compositional bias: polar residues. Ser1281 carries the post-translational modification Phosphoserine. Residues 1307–1361 (EKIWHYKDPSGKVQGPFSMAQLRKWNNTGYFPAKLEIWKANESPLDSVLLTDALA) form the GYF domain. Polar residues-rich tracts occupy residues 1409–1433 (RNSQDTWSQGGSLPSPTPNQITTPT), 1441–1469 (SRWSPTKPSPQSANQSMNYSVAQSGQSQT), 1499–1509 (VSVNHSATLHS), and 1518–1528 (SWGSMQTDHGG). 3 disordered regions span residues 1409 to 1469 (RNSQ…QSQT), 1485 to 1605 (QPQT…SWGQ), and 1649 to 1746 (GQTQ…QQNN). Over residues 1529-1555 (SNTPSSQNNSTSYGTPSPSVLPSQSQP) the composition is skewed to low complexity. The segment covering 1569-1579 (SQPNAQAQAQW) has biased composition (polar residues). 2 stretches are compositionally biased toward low complexity: residues 1585 to 1602 (NNNQNSAQPQAPANQNSS) and 1666 to 1677 (QSQSQSQVQAQA). Residues 1678–1708 (GTTGSGWMQPGQGIQSGNSNQNWGTQNQTAI) are compositionally biased toward polar residues. Residues 1722–1735 (GNQQQSQNGDSGYG) show a composition bias toward low complexity. Residues 1737 to 1746 (NRQSGGQQNN) are compositionally biased toward polar residues. Residues 1747-1773 (FKGQRVCKFFRENGHCRKGASCNYLHN) form a C3H1-type zinc finger.

In terms of assembly, interacts with unmethylated histone H3 and AGO2. The interaction with AGO2 in required to direct DNA methylation and silencing. Expressed in seedlings, mostly in the vasculature and shoot apices of young seedlings.

The protein resides in the nucleus. Functionally, plays a central role in integrating RNA silencing and chromatin signals in 21 nt siRNA-dependent DNA methylation on cytosine pathway leading to transcriptional gene silencing of specific sequences. Involved in a chromatin-based RNA silencing pathway that encompasses both post-transcriptional gene silencing (PTGS) (e.g. RDR1, RDR6 and AGO2) and transcriptional gene silencing (TGS) (e.g. siRNA-dependent DNA methylation and histone H3) components. Mediates siRNA accumulation at specific chromatin loci. Binds H3K4me0 through its PHD to enforce low levels of H3K4 methylation and gene silencing at a subset of genomic loci. The protein is Zinc finger CCCH domain-containing protein 19 (NERD) of Arabidopsis thaliana (Mouse-ear cress).